We begin with the raw amino-acid sequence, 441 residues long: Histidinol dehydrogenase (441 aa).

Residues tyrosine 136, glutamine 197, and asparagine 220 each contribute to the NAD(+) site. Substrate is bound by residues serine 243, glutamine 265, and histidine 268. Residues glutamine 265 and histidine 268 each coordinate Zn(2+). Residues glutamate 333 and histidine 334 each act as proton acceptor in the active site. Residues histidine 334, aspartate 367, glutamate 421, and histidine 426 each contribute to the substrate site. Aspartate 367 is a binding site for Zn(2+). Zn(2+) is bound at residue histidine 426.

The protein belongs to the histidinol dehydrogenase family. Requires Zn(2+) as cofactor.

It catalyses the reaction L-histidinol + 2 NAD(+) + H2O = L-histidine + 2 NADH + 3 H(+). The protein operates within amino-acid biosynthesis; L-histidine biosynthesis; L-histidine from 5-phospho-alpha-D-ribose 1-diphosphate: step 9/9. Catalyzes the sequential NAD-dependent oxidations of L-histidinol to L-histidinaldehyde and then to L-histidine. This Pseudomonas fluorescens (strain Pf0-1) protein is Histidinol dehydrogenase.